The chain runs to 435 residues: RuBisCO large subunit-binding protein subunit beta-1 (435 aa).

Belongs to the chaperonin (HSP60) family. In terms of assembly, oligomer of probably six alpha and six beta subunits.

Its subcellular location is the plastid. The protein resides in the chloroplast. This protein binds RuBisCO small and large subunits and is implicated in the assembly of the enzyme oligomer. This is RuBisCO large subunit-binding protein subunit beta-1 from Chlamydomonas reinhardtii (Chlamydomonas smithii).